The following is a 330-amino-acid chain: Aquaporin-3 (330 aa).

Residues 1–40 (MSATPIIHLRDVKKRTGVLNAWERVRNKPQVHWAMECFAE) are Cytoplasmic-facing. Residues 41-61 (ALGVFFYVYFGLGSTAAWVIG) traverse the membrane as a helical segment. Residues 62–71 (NILKQSGLSS) are Extracellular-facing. A helical transmembrane segment spans residues 72 to 92 (VFQIGFAYAFGILFAIGVCAA). At 93–124 (TSGGHFNPCVTIAFTIFRGFPPLKAVRYIVAQ) the chain is on the cytoplasmic side. An NPA 1 motif is present at residues 99 to 101 (NPC). Residues 125–145 (ILGAYIASALVYNQWKVLIVE) form a helical membrane-spanning segment. Residues 146 to 157 (SELLLKQAGVYE) lie on the Extracellular side of the membrane. Residues 158–178 (TTMFTPNGPAGIFALYLLPGA) form a helical membrane-spanning segment. Over 179-183 (QTLPR) the chain is Cytoplasmic. A helical transmembrane segment spans residues 184-204 (AFLNEFVNCFVLALVIWAALD). Residues 205–207 (PTS) lie on the Extracellular side of the membrane. Residues 208–228 (FMIPPVMAPFIIAAAYAGSIW) traverse the membrane as a helical segment. Residues 229 to 264 (GYAVPAISLNSARDIGCRLFALTIWGKSAAGGSYSA) lie on the Cytoplasmic side of the membrane. The NPA 2 signature appears at 238–240 (NSA). Residues 265-285 (IAALVNIPATLLAAVVYELFL) form a helical membrane-spanning segment. Topologically, residues 286–330 (VDSDRVVAGSHLEFMNVAANHRRHRQQAEDDNLVEADDSSQEKPV) are extracellular. The interval 308–330 (RHRQQAEDDNLVEADDSSQEKPV) is disordered. Residues 314–324 (EDDNLVEADDS) are compositionally biased toward acidic residues.

The protein belongs to the MIP/aquaporin (TC 1.A.8) family.

The protein resides in the cell membrane. The enzyme catalyses H2O(in) = H2O(out). It catalyses the reaction CO2(out) = CO2(in). Functionally, water channel required to facilitate the transport of water across membranes. Also mediates the transport of carbon dioxide across the membrane. In Laccaria bicolor (Bicoloured deceiver), this protein is Aquaporin-3.